A 134-amino-acid chain; its full sequence is Ribonuclease P protein component (134 aa).

This sequence belongs to the RnpA family. Consists of a catalytic RNA component (M1 or rnpB) and a protein subunit.

It catalyses the reaction Endonucleolytic cleavage of RNA, removing 5'-extranucleotides from tRNA precursor.. RNaseP catalyzes the removal of the 5'-leader sequence from pre-tRNA to produce the mature 5'-terminus. It can also cleave other RNA substrates such as 4.5S RNA. The protein component plays an auxiliary but essential role in vivo by binding to the 5'-leader sequence and broadening the substrate specificity of the ribozyme. The polypeptide is Ribonuclease P protein component (Pseudomonas putida (strain GB-1)).